The primary structure comprises 421 residues: Serine hydroxymethyltransferase (421 aa).

Residues L121 and 125-127 (GHL) contribute to the (6S)-5,6,7,8-tetrahydrofolate site. K229 carries the N6-(pyridoxal phosphate)lysine modification.

The protein belongs to the SHMT family. Homodimer. Requires pyridoxal 5'-phosphate as cofactor.

The protein resides in the cytoplasm. The catalysed reaction is (6R)-5,10-methylene-5,6,7,8-tetrahydrofolate + glycine + H2O = (6S)-5,6,7,8-tetrahydrofolate + L-serine. It participates in one-carbon metabolism; tetrahydrofolate interconversion. The protein operates within amino-acid biosynthesis; glycine biosynthesis; glycine from L-serine: step 1/1. Catalyzes the reversible interconversion of serine and glycine with tetrahydrofolate (THF) serving as the one-carbon carrier. This reaction serves as the major source of one-carbon groups required for the biosynthesis of purines, thymidylate, methionine, and other important biomolecules. Also exhibits THF-independent aldolase activity toward beta-hydroxyamino acids, producing glycine and aldehydes, via a retro-aldol mechanism. The protein is Serine hydroxymethyltransferase of Haemophilus influenzae (strain ATCC 51907 / DSM 11121 / KW20 / Rd).